We begin with the raw amino-acid sequence, 122 residues long: Small ribosomal subunit protein uS12c (122 aa).

This sequence belongs to the universal ribosomal protein uS12 family. In terms of assembly, part of the 30S ribosomal subunit.

It is found in the plastid. Its subcellular location is the chloroplast. In terms of biological role, with S4 and S5 plays an important role in translational accuracy. Located at the interface of the 30S and 50S subunits. In Cyanidioschyzon merolae (strain NIES-3377 / 10D) (Unicellular red alga), this protein is Small ribosomal subunit protein uS12c (rps12).